Here is a 651-residue protein sequence, read N- to C-terminus: Histone-arginine methyltransferase CARM1 (651 aa).

An interaction with C9orf72 region spans residues 28-139; sequence ATVSVFPGAR…GHTLERSVFS (112 aa). The region spanning 147-454 is the SAM-dependent MTase PRMT-type domain; it reads AVQYFQFYGY…KRQSYDISIV (308 aa). Q160, R169, G193, and E215 together coordinate S-adenosyl-L-methionine. Position 217 is a phosphoserine (S217). A Glycyl lysine isopeptide (Lys-Gly) (interchain with G-Cter in ubiquitin) cross-link involves residue K228. Positions 244 and 272 each coordinate S-adenosyl-L-methionine. Residues 347–380 are required for nuclear translocation; the sequence is RILMAKSVKYTVNFLEAKEGDLHRIEIPFKFHML. The interval 500–651 is transactivation domain; sequence TGSTYNLSSG…IPTNTMHYGS (152 aa). R551 is subject to Dimethylated arginine. A disordered region spans residues 581 to 617; that stretch reads RSSYQWGPGRLRGHAGSSVPMTCPTGSSGAQGGGGSS.

Belongs to the class I-like SAM-binding methyltransferase superfamily. Protein arginine N-methyltransferase family. In terms of assembly, homodimer. Interacts with NR1H4. Interacts with SNRPC. Interacts with the C-terminus of NCOA2/GRIP1, NCO3/ACTR and NCOA1/SRC1. Part of a complex consisting of CARM1, EP300/P300 and NCOA2/GRIP1. Interacts with FLII, TP53, myogenic factor MEF2, EP300/P300, TRIM24, CREBBP and CTNNB1. Interacts with RELA. Identified in a complex containing CARM1, TRIM24 and NCOA2/GRIP1. Interacts with NCOA3/SRC3. Interacts with SKP2. Interacts (via PH domain-like fold) with C9orf72. Interacts with PARP1; promoting PARP1 recruimtent to replication forks. Auto-methylated on Arg-551. Methylation enhances transcription coactivator activity. Methylation is required for its role in the regulation of pre-mRNA alternative splicing. Post-translationally, phosphorylation at Ser-217 interferes with S-adenosyl-L-methionine binding and strongly reduces methyltransferase activity. Phosphorylation at Ser-217 is strongly increased during mitosis, and decreases rapidly to a very low, basal level after entry into the G1 phase of the cell cycle. Phosphorylation at Ser-217 may promote location in the cytosol. In terms of processing, ubiquitinated by E3 ubiquitin-protein ligase complex containing FBXO9 at Lys-228; leading to proteasomal degradation. In terms of tissue distribution, isoform 1 is expressed at low levels in brain, liver and testis. Isoform 2 is highly expressed in brain, liver, skeletal muscle and testis. As to expression, isoform 3 is highly expressed in spleen, liver and kidney. In terms of tissue distribution, isoform 4 is expressed in spleen, liver and kidney.

Its subcellular location is the nucleus. It is found in the cytoplasm. It localises to the chromosome. It catalyses the reaction L-arginyl-[protein] + 2 S-adenosyl-L-methionine = N(omega),N(omega)-dimethyl-L-arginyl-[protein] + 2 S-adenosyl-L-homocysteine + 2 H(+). With respect to regulation, methylation of H3R17 (H3R17me) by CARM1 is stimulated by preacetylation of H3 'Lys-18' (H3K18ac) H3 'Lys-23' (H3K23ac) by EP300 and blocked by citrullination of H3 'Arg-17' (H3R17ci) by PADI4. Functionally, methylates (mono- and asymmetric dimethylation) the guanidino nitrogens of arginyl residues in several proteins involved in DNA packaging, transcription regulation, pre-mRNA splicing, and mRNA stability. Recruited to promoters upon gene activation together with histone acetyltransferases from EP300/P300 and p160 families, methylates histone H3 at 'Arg-17' (H3R17me), forming mainly asymmetric dimethylarginine (H3R17me2a), leading to activation of transcription via chromatin remodeling. During nuclear hormone receptor activation and TCF7L2/TCF4 activation, acts synergically with EP300/P300 and either one of the p160 histone acetyltransferases NCOA1/SRC1, NCOA2/GRIP1 and NCOA3/ACTR or CTNNB1/beta-catenin to activate transcription. During myogenic transcriptional activation, acts together with NCOA3/ACTR as a coactivator for MEF2C. During monocyte inflammatory stimulation, acts together with EP300/P300 as a coactivator for NF-kappa-B. Acts as a coactivator for PPARG, promotes adipocyte differentiation and the accumulation of brown fat tissue. Plays a role in the regulation of pre-mRNA alternative splicing by methylation of splicing factors. Also seems to be involved in p53/TP53 transcriptional activation. Methylates EP300/P300, both at 'Arg-2142', which may loosen its interaction with NCOA2/GRIP1, and at 'Arg-580' and 'Arg-604' in the KIX domain, which impairs its interaction with CREB and inhibits CREB-dependent transcriptional activation. Also methylates arginine residues in RNA-binding proteins PABPC1, ELAVL1 and ELAV4, which may affect their mRNA-stabilizing properties and the half-life of their target mRNAs. Acts as a transcriptional coactivator of ACACA/acetyl-CoA carboxylase by enriching H3R17 methylation at its promoter, thereby positively regulating fatty acid synthesis. Independently of its methyltransferase activity, involved in replication fork progression: promotes PARP1 recruitment to replication forks, leading to poly-ADP-ribosylation of chromatin at replication forks and reduced fork speed. In terms of biological role, isoform 3 specifically affects pre-mRNA splicing. This activity is independent from methyltransferase activity. This chain is Histone-arginine methyltransferase CARM1 (Carm1), found in Rattus norvegicus (Rat).